A 336-amino-acid polypeptide reads, in one-letter code: Holliday junction branch migration complex subunit RuvB (336 aa).

Residues 1 to 11 (MDDDKLLSGDK) are compositionally biased toward basic and acidic residues. Residues 1-21 (MDDDKLLSGDKADDEEASLEK) are disordered. The large ATPase domain (RuvB-L) stretch occupies residues 1–184 (MDDDKLLSGD…FGIVEHMAYY (184 aa)). ATP-binding positions include Leu23, Arg24, Gly65, Lys68, Thr69, Thr70, 131–133 (EDF), Arg174, Tyr184, and Arg221. Thr69 lines the Mg(2+) pocket. Residues 185–255 (EVADLEDIVK…IVARSLTYLR (71 aa)) form a small ATPAse domain (RuvB-S) region. The tract at residues 258-336 (DAGLDETDNK…HLGFPYPENK (79 aa)) is head domain (RuvB-H). DNA contacts are provided by Arg313 and Arg318.

Belongs to the RuvB family. As to quaternary structure, homohexamer. Forms an RuvA(8)-RuvB(12)-Holliday junction (HJ) complex. HJ DNA is sandwiched between 2 RuvA tetramers; dsDNA enters through RuvA and exits via RuvB. An RuvB hexamer assembles on each DNA strand where it exits the tetramer. Each RuvB hexamer is contacted by two RuvA subunits (via domain III) on 2 adjacent RuvB subunits; this complex drives branch migration. In the full resolvosome a probable DNA-RuvA(4)-RuvB(12)-RuvC(2) complex forms which resolves the HJ.

It is found in the cytoplasm. The enzyme catalyses ATP + H2O = ADP + phosphate + H(+). In terms of biological role, the RuvA-RuvB-RuvC complex processes Holliday junction (HJ) DNA during genetic recombination and DNA repair, while the RuvA-RuvB complex plays an important role in the rescue of blocked DNA replication forks via replication fork reversal (RFR). RuvA specifically binds to HJ cruciform DNA, conferring on it an open structure. The RuvB hexamer acts as an ATP-dependent pump, pulling dsDNA into and through the RuvAB complex. RuvB forms 2 homohexamers on either side of HJ DNA bound by 1 or 2 RuvA tetramers; 4 subunits per hexamer contact DNA at a time. Coordinated motions by a converter formed by DNA-disengaged RuvB subunits stimulates ATP hydrolysis and nucleotide exchange. Immobilization of the converter enables RuvB to convert the ATP-contained energy into a lever motion, pulling 2 nucleotides of DNA out of the RuvA tetramer per ATP hydrolyzed, thus driving DNA branch migration. The RuvB motors rotate together with the DNA substrate, which together with the progressing nucleotide cycle form the mechanistic basis for DNA recombination by continuous HJ branch migration. Branch migration allows RuvC to scan DNA until it finds its consensus sequence, where it cleaves and resolves cruciform DNA. The polypeptide is Holliday junction branch migration complex subunit RuvB (Lactiplantibacillus plantarum (strain ATCC BAA-793 / NCIMB 8826 / WCFS1) (Lactobacillus plantarum)).